Consider the following 585-residue polypeptide: A-type ATP synthase subunit A (585 aa).

The interval 192-211 is disordered; sequence MRQEWPVREPRPTVEKKTPR. Residues 196–211 are compositionally biased toward basic and acidic residues; the sequence is WPVREPRPTVEKKTPR. 237–244 contributes to the ATP binding site; sequence GPFGSGKT.

The protein belongs to the ATPase alpha/beta chains family. Has multiple subunits with at least A(3), B(3), C, D, E, F, H, I and proteolipid K(x).

It localises to the cell membrane. The catalysed reaction is ATP + H2O + 4 H(+)(in) = ADP + phosphate + 5 H(+)(out). In terms of biological role, component of the A-type ATP synthase that produces ATP from ADP in the presence of a proton gradient across the membrane. The A chain is the catalytic subunit. This chain is A-type ATP synthase subunit A, found in Haloquadratum walsbyi (strain DSM 16790 / HBSQ001).